A 309-amino-acid polypeptide reads, in one-letter code: Pantothenate synthetase (309 aa).

An N-acetylthreonine modification is found at Thr-2. 40–47 lines the ATP pocket; the sequence is MGALHEGH. The active-site Proton donor is His-47. Residue Gln-72 participates in (R)-pantoate binding. Position 72 (Gln-72) interacts with beta-alanine. Positions 88, 89, and 92 each coordinate Mg(2+). 158 to 161 provides a ligand contact to ATP; it reads GEKD. Gln-164 provides a ligand contact to (R)-pantoate. ATP is bound by residues Val-187 and 195 to 198; that span reads MSSR.

Belongs to the pantothenate synthetase family.

It localises to the cytoplasm. It carries out the reaction (R)-pantoate + beta-alanine + ATP = (R)-pantothenate + AMP + diphosphate + H(+). It participates in cofactor biosynthesis; (R)-pantothenate biosynthesis; (R)-pantothenate from (R)-pantoate and beta-alanine: step 1/1. Pantothenate exhibits uncompetitive inhibition toward both D-pantoate and ATP, and non-competitive inhibition toward beta-alanine. AMPCPP exhibits competitive inhibition toward ATP, uncompetitive inhibition toward beta-alanine, and non-competitive inhibition toward D-pantoate. The enzyme is most active in the presence of magnesium or manganese. Other divalent cations (cobalt, nickel, zinc) are less effective. Functionally, catalyzes the condensation of pantoate with beta-alanine in an ATP-dependent reaction via a pantoyl-adenylate intermediate. The chain is Pantothenate synthetase (panC) from Mycobacterium tuberculosis (strain ATCC 25618 / H37Rv).